The sequence spans 148 residues: Ribonuclease H (148 aa).

Residues 3–144 (DKEQVVIYTD…ADQLANRGVA (142 aa)) form the RNase H type-1 domain. Positions 12, 50, 72, and 136 each coordinate Mg(2+). The interval 125–148 (GHTGDPGNERADQLANRGVAELPR) is disordered.

Belongs to the RNase H family. Monomer. Mg(2+) serves as cofactor.

The protein resides in the cytoplasm. It carries out the reaction Endonucleolytic cleavage to 5'-phosphomonoester.. Its function is as follows. Endonuclease that specifically degrades the RNA of RNA-DNA hybrids. The sequence is that of Ribonuclease H from Pseudomonas paraeruginosa (strain DSM 24068 / PA7) (Pseudomonas aeruginosa (strain PA7)).